The primary structure comprises 453 residues: tRNA modification GTPase MnmE (453 aa).

Residues arginine 22, glutamate 79, and lysine 119 each coordinate (6S)-5-formyl-5,6,7,8-tetrahydrofolate. A TrmE-type G domain is found at 215-376 (GMKVVIAGRP…LREHLKACMG (162 aa)). Asparagine 225 is a binding site for K(+). GTP-binding positions include 225 to 230 (NAGKSS), 244 to 250 (TEIAGTT), 269 to 272 (DTAG), and 334 to 337 (NKAD). Serine 229 is a binding site for Mg(2+). K(+)-binding residues include threonine 244, isoleucine 246, and threonine 249. Threonine 250 is a Mg(2+) binding site. (6S)-5-formyl-5,6,7,8-tetrahydrofolate is bound at residue lysine 453.

This sequence belongs to the TRAFAC class TrmE-Era-EngA-EngB-Septin-like GTPase superfamily. TrmE GTPase family. Homodimer. Heterotetramer of two MnmE and two MnmG subunits. K(+) serves as cofactor.

The protein resides in the cytoplasm. In terms of biological role, exhibits a very high intrinsic GTPase hydrolysis rate. Involved in the addition of a carboxymethylaminomethyl (cmnm) group at the wobble position (U34) of certain tRNAs, forming tRNA-cmnm(5)s(2)U34. This chain is tRNA modification GTPase MnmE, found in Aeromonas hydrophila subsp. hydrophila (strain ATCC 7966 / DSM 30187 / BCRC 13018 / CCUG 14551 / JCM 1027 / KCTC 2358 / NCIMB 9240 / NCTC 8049).